A 206-amino-acid chain; its full sequence is Inner membrane protein YnjF (206 aa).

Residues 1–37 (MLDRHLHPRIKPLLHQCVRVLDKPGITPDGLTLVGFA) are Periplasmic-facing. The helical transmembrane segment at 38–60 (IGVLALPFLALGWYLAALVVILL) threads the bilayer. The Cytoplasmic portion of the chain corresponds to 61 to 79 (NRLLDGLDGALARRRELTD). Residues 80–102 (AGGFLDISLDFLFYALVPFGFIL) form a helical membrane-spanning segment. Topologically, residues 103 to 111 (AAPEQNALA) are periplasmic. A helical transmembrane segment spans residues 112 to 134 (GGWLLFAFIGTGSSFLAFAALAA). The Cytoplasmic segment spans residues 135–146 (KHQIDNPGYAHK). A helical membrane pass occupies residues 147 to 169 (SFYYLGGLTEGTETILLFVLGCL). Over 170–173 (FPAW) the chain is Periplasmic. A helical membrane pass occupies residues 174-196 (FAWFAWIFGALCWMTTFTRVWSG). Residues 197–206 (YLTLKSLQRQ) are Cytoplasmic-facing.

It belongs to the CDP-alcohol phosphatidyltransferase class-I family.

The protein resides in the cell inner membrane. The polypeptide is Inner membrane protein YnjF (ynjF) (Escherichia coli (strain K12)).